Reading from the N-terminus, the 468-residue chain is Glutamate--tRNA ligase (468 aa).

Positions 12 to 22 match the 'HIGH' region motif; sequence PSPTGMMHIGT. A 'KMSKS' region motif is present at residues 238-242; the sequence is KLSKR. Lys-241 contacts ATP.

It belongs to the class-I aminoacyl-tRNA synthetase family. Glutamate--tRNA ligase type 1 subfamily. As to quaternary structure, monomer.

Its subcellular location is the cytoplasm. It catalyses the reaction tRNA(Glu) + L-glutamate + ATP = L-glutamyl-tRNA(Glu) + AMP + diphosphate. Its function is as follows. Catalyzes the attachment of glutamate to tRNA(Glu) in a two-step reaction: glutamate is first activated by ATP to form Glu-AMP and then transferred to the acceptor end of tRNA(Glu). The protein is Glutamate--tRNA ligase of Phenylobacterium zucineum (strain HLK1).